Consider the following 299-residue polypeptide: HTH-type transcriptional regulator CysL (299 aa).

An HTH lysR-type domain is found at 1–58; it reads MYYDVLKTFIAVVEEKNFTKAAEKLMISQPSVSLHIKNLEKEFQTALLNRSPKHFTTT. A DNA-binding region (H-T-H motif) is located at residues 18–37; that stretch reads FTKAAEKLMISQPSVSLHIK.

This sequence belongs to the LysR transcriptional regulatory family.

Functionally, transcriptional activator of the cysJI operon which is involved in sulfur assimilation. Also negatively regulates its own transcription. In Bacillus subtilis (strain 168), this protein is HTH-type transcriptional regulator CysL (cysL).